The primary structure comprises 242 residues: Uridylate kinase (242 aa).

Position 15 to 18 (15 to 18 (KLSG)) interacts with ATP. An involved in allosteric activation by GTP region spans residues 23-28 (GAEGFG). Glycine 57 serves as a coordination point for UMP. 2 residues coordinate ATP: glycine 58 and arginine 62. Residues aspartate 77 and 138 to 145 (TGNPFFTT) contribute to the UMP site. The ATP site is built by threonine 165, tyrosine 171, and aspartate 174.

Belongs to the UMP kinase family. Homohexamer.

It localises to the cytoplasm. The enzyme catalyses UMP + ATP = UDP + ADP. Its pathway is pyrimidine metabolism; CTP biosynthesis via de novo pathway; UDP from UMP (UMPK route): step 1/1. Allosterically activated by GTP. Inhibited by UTP. In terms of biological role, catalyzes the reversible phosphorylation of UMP to UDP. The chain is Uridylate kinase from Photorhabdus laumondii subsp. laumondii (strain DSM 15139 / CIP 105565 / TT01) (Photorhabdus luminescens subsp. laumondii).